The following is a 999-amino-acid chain: MYQSIPQQGNYIYNGNNNFFPQQQPQQQQYLNNSNNNNNNNNNNNNNNNNINNNNNNFQQSYNNGNNNNYNNNNGYQQQTSSYDMYGNNVNINNNNNNNVNINSQNNVNNNNNNNNNNNNGNINNNMLMATSSALNNIVKVTNGYQQQQQQQLLQQTTQQQLQQQQQLLQQQQQQIQQQQAALQLQLEQQQQQKMVLMFGDEPMGYLPFSEDKNLMLLSALNTNVDGGSFYGIQQQQQQQQLQQQQLQQQQQLQQQQQQLQQQQIQQQQIQQQQQQQQQQISPIQESASPYYSTPIQSNTMLSIPSSPGIPSSIPQLNNSNNINNNSNNNNNNNNNNNNNNINYNSNMASNFISQHSNNGSNTSSPVPQTTYLQNSGGNFNAYNGSNTNSPITPSSYLQPTTSQDQVIPQQLSPNHDQNQQIIQQQQKILQQQQQQQLLLQQQIQQQQQQQLHQPQSPQLPQSPQQSPQQSPQQLQPQQSPQQPQQQPQQQPQQLQQTQQKTVQRPPIIQPTTIQPQSPQPPQQPQQKQPTINSSITPIQPIQQMIQQLTQNSSTKSTSKASNIPATTAACPKVDLLPNKSPISSYILPHDFEETLAHLSEKQKTRRRASQNLASRNYRQRKKQYVNEVEDRLDDIVQENERLKKELYDSKKILKKLLHENNILKSGGQLPNKSDIPGCTGSEDEDEDDFDQFDQQQQDGSADPSTPVVETEPDISVLVDRLQVDMSITTQDDLTTTLKQFYSTLKNRQDLYINQIKQIVNPCTQAKLALLDGEISPAQSCPFEDPSEKQHSDPNSSPIGDMPSPYEQLEPTKWWSNFCNEANINPEQENRVRQLRQESNLRHKKIIKERTHLNREIREYYHSKVFNGTVNNGGNTKSKKTAASTSTTTTTTSTSTTTTTTTTISTDVDISNNISSPVQSHLVQLSGLLDKLKENIDHENETLIQTYEKLGFILSPFQEALFITKIYNNIFSESSYSNIQMLHGIKDAILYSYVDPTYT.

2 stretches are compositionally biased toward low complexity: residues 1–79 (MYQS…YQQQ) and 88–126 (NNVN…INNN). The tract at residues 1-126 (MYQSIPQQGN…NNNNGNINNN (126 aa)) is disordered. 2 coiled-coil regions span residues 148 to 198 (QQQQ…MVLM) and 232 to 282 (GIQQ…QQIS). The segment covering 286 to 302 (ESASPYYSTPIQSNTML) has biased composition (polar residues). Disordered stretches follow at residues 286 to 406 (ESAS…SQDQ), 450 to 533 (QQLH…PTIN), and 601 to 620 (EKQK…NYRQ). Residues 303 to 347 (SIPSSPGIPSSIPQLNNSNNINNNSNNNNNNNNNNNNNNINYNSN) are compositionally biased toward low complexity. Residues 348-406 (MASNFISQHSNNGSNTSSPVPQTTYLQNSGGNFNAYNGSNTNSPITPSSYLQPTTSQDQ) are compositionally biased toward polar residues. The stretch at 423–451 (IQQQQKILQQQQQQQLLLQQQIQQQQQQQ) forms a coiled coil. Positions 450–517 (QQLHQPQSPQ…IIQPTTIQPQ (68 aa)) are enriched in low complexity. In terms of domain architecture, bZIP spans 601–664 (EKQKTRRRAS…KKLLHENNIL (64 aa)). Positions 602 to 632 (KQKTRRRASQNLASRNYRQRKKQYVNEVEDR) are basic motif. The interval 636-643 (IVQENERL) is leucine-zipper. 3 disordered regions span residues 665-711 (KSGG…VVET), 779-807 (QSCP…SPYE), and 870-899 (VNNG…TTTT). Acidic residues predominate over residues 682 to 692 (SEDEDEDDFDQ). A coiled-coil region spans residues 921 to 950 (HLVQLSGLLDKLKENIDHENETLIQTYEKL).

Belongs to the bZIP family.

It localises to the nucleus. Probable transcriptional regulator. This chain is Probable basic-leucine zipper transcription factor N (bzpN), found in Dictyostelium discoideum (Social amoeba).